The following is a 538-amino-acid chain: Beta-1,4-mannosyl-glycoprotein 4-beta-N-acetylglucosaminyltransferase (538 aa).

Residues 1-7 (MKMRRYK) are Cytoplasmic-facing. The helical; Signal-anchor for type II membrane protein transmembrane segment at 8 to 23 (LFLMFCMAGLCLISFL) threads the bilayer. The Lumenal portion of the chain corresponds to 24–538 (HFFKTLSYVT…VRGKLDTTEG (515 aa)). The disordered stretch occupies residues 121–151 (GTRMLEKPSPGRTEEKTKVAEGSSVRGPARR). N-linked (GlcNAc...) asparagine glycans are attached at residues N245, N263, and N401. Positions 509–538 (PKSTVEGGRRNQGSDGRSSAVRGKLDTTEG) are disordered.

This sequence belongs to the glycosyltransferase 17 family. Interacts with MGAT4D.

The protein localises to the golgi apparatus membrane. It carries out the reaction N(4)-{beta-D-GlcNAc-(1-&gt;2)-alpha-D-Man-(1-&gt;3)-[beta-D-GlcNAc-(1-&gt;2)-alpha-D-Man-(1-&gt;6)]-beta-D-Man-(1-&gt;4)-beta-D-GlcNAc-(1-&gt;4)-beta-D-GlcNAc}-L-asparaginyl-[protein] + UDP-N-acetyl-alpha-D-glucosamine = N(4)-{beta-D-GlcNAc-(1-&gt;2)-alpha-D-Man-(1-&gt;3)-[beta-D-GlcNAc-(1-&gt;4)]-[beta-D-GlcNAc-(1-&gt;2)-alpha-D-Man-(1-&gt;6)]-beta-D-Man-(1-&gt;4)-beta-D-GlcNAc-(1-&gt;4)-beta-D-GlcNAc}-L-asparaginyl-[protein] + UDP + H(+). It functions in the pathway protein modification; protein glycosylation. Its function is as follows. It is involved in the regulation of the biosynthesis and biological function of glycoprotein oligosaccharides. Catalyzes the addition of N-acetylglucosamine in beta 1-4 linkage to the beta-linked mannose of the trimannosyl core of N-linked sugar chains, called bisecting N-acetylglucosamine (GlcNAc). It is one of the most important enzymes involved in the regulation of the biosynthesis of glycoprotein oligosaccharides. The addition of this bisecting GlcNAc residue alters not only the composition, but also the conformation of the N-glycan. The introduction of the bisecting GlcNAc residue results in the suppression of further processing and elongation of N-glycans, precluding the formation of beta-1,6 GlcNAc branching, catalyzed by MGAT5 since it is unable to use the bisected oligosaccharide as a substrate. Addition of bisecting N-acetylglucosamine to CDH1/E-cadherin modulates CDH1 cell membrane location. Inhibits NeuAc-alpha-2,3-Gal-beta-1,4-GlcNAc- formation which modulates sialylation levels and plays a role in cell migration regulation. In brain, addition of bisecting N-acetylglucosamine to BACE1 blocks its lysosomal targeting in response to oxidative stress and further degradation which increases its location to early endosome and the APP cleavage. The protein is Beta-1,4-mannosyl-glycoprotein 4-beta-N-acetylglucosaminyltransferase (Mgat3) of Rattus norvegicus (Rat).